The primary structure comprises 209 residues: 3-hexulose-6-phosphate synthase (209 aa).

This sequence belongs to the HPS/KGPDC family. HPS subfamily. As to quaternary structure, homodimer.

It carries out the reaction D-ribulose 5-phosphate + formaldehyde = D-arabino-hex-3-ulose 6-phosphate. Its pathway is one-carbon metabolism; formaldehyde assimilation via RuMP pathway; D-fructose 6-phosphate from D-ribulose 5-phosphate and formaldehyde: step 1/2. Its function is as follows. Catalyzes the condensation of ribulose 5-phosphate with formaldehyde to form 3-hexulose 6-phosphate. This is 3-hexulose-6-phosphate synthase (rmpA) from Methylomonas aminofaciens.